We begin with the raw amino-acid sequence, 454 residues long: UPF0210 protein Memar_2269 (454 aa).

It belongs to the UPF0210 family.

The polypeptide is UPF0210 protein Memar_2269 (Methanoculleus marisnigri (strain ATCC 35101 / DSM 1498 / JR1)).